Consider the following 205-residue polypeptide: MTVHPDHYLIAAPVARLIEEFARLPGIGPKTASRLTFYLLRAEPKQAQALAQAILDVKAQVGYCRRCFNITVDELCPICRDPSRDQTKICVVEEPLDVLAIERTGAYRGLYHVLHGHIAPLEGIYREDLKIDELIARVRSEPVNEVILATNPNTEGEATAFLLLRDLAPLGVRVTRPARGLPTGGDLEWADPETLGSALEGRREL.

A C4-type zinc finger spans residues Cys-64–Cys-79. The region spanning Thr-87 to Pro-182 is the Toprim domain.

This sequence belongs to the RecR family.

Its function is as follows. May play a role in DNA repair. It seems to be involved in an RecBC-independent recombinational process of DNA repair. It may act with RecF and RecO. This chain is Recombination protein RecR, found in Chloroflexus aggregans (strain MD-66 / DSM 9485).